A 628-amino-acid chain; its full sequence is Vacuolar-sorting receptor 3 (628 aa).

An N-terminal signal peptide occupies residues 1–24 (MKQLLCYLPWLLLLTLLVSPLNDA). The Lumenal portion of the chain corresponds to 25–569 (RFVVEKNSLS…SKTGAQVRSA (545 aa)). The region spanning 56 to 168 (QYGGSMAGTV…GFGEKLKKAI (113 aa)) is the PA domain. N-linked (GlcNAc...) asparagine glycosylation is found at Asn-148, Asn-294, and Asn-434. EGF-like domains lie at 416 to 466 (ESNE…SHCE) and 469 to 516 (GPGR…KKCE). Intrachain disulfides connect Cys-420-Cys-438, Cys-427-Cys-447, Cys-449-Cys-465, Cys-473-Cys-493, Cys-480-Cys-501, Cys-503-Cys-515, and Cys-545-Cys-558. The region spanning 517–559 (DINECKEKKACQCPECSCKNTWGSYECSCSGDLLYIRDHDTCI) is the EGF-like 3; calcium-binding domain. A helical transmembrane segment spans residues 570 to 590 (WAAVWLIMLSLGLAAAGAYLV). The Cytoplasmic portion of the chain corresponds to 591-628 (YKYRLRQYMDSEIRAIMAQYMPLDSQPEIPNHVNDERA). The Tyrosine-based internalization motif motif lies at 610–613 (YMPL).

It belongs to the VSR (BP-80) family. As to expression, expressed in seeds, seedlings, roots, leaves, flowers and siliques.

It is found in the membrane. It localises to the golgi apparatus membrane. The protein localises to the cytoplasmic vesicle. The protein resides in the clathrin-coated vesicle membrane. Its subcellular location is the prevacuolar compartment membrane. In terms of biological role, vacuolar-sorting receptor (VSR) involved in clathrin-coated vesicles sorting from Golgi apparatus to vacuoles. This is Vacuolar-sorting receptor 3 (VSR3) from Arabidopsis thaliana (Mouse-ear cress).